A 555-amino-acid chain; its full sequence is Spermine oxidase (555 aa).

Residues A35, E55, R63, 79-80 (TW), and V261 contribute to the FAD site. A disordered region spans residues 271–307 (AHPRGPEIEPRGEGDHNHDTGEGGQSGENPQQGRWDE). Positions 274–291 (RGPEIEPRGEGDHNHDTG) are enriched in basic and acidic residues. FAD-binding positions include E519 and 528 to 529 (TT).

The protein belongs to the flavin monoamine oxidase family. Requires FAD as cofactor. Widely expressed. Isoform 1 and isoform 2 are expressed at higher level in brain and skeletal muscle. Isoform 7 is found in brain and spleen, isoform 10 is widely expressed but found at lower level in heart, kidney, liver and lung.

It is found in the cytoplasm. Its subcellular location is the nucleus. It carries out the reaction spermine + O2 + H2O = 3-aminopropanal + spermidine + H2O2. Its pathway is amine and polyamine degradation; spermine degradation. In terms of biological role, flavoenzyme which catalyzes the oxidation of spermine to spermidine. Can also use N(1)-acetylspermine and spermidine as substrates, with different affinity depending on the isoform (isozyme) and on the experimental conditions. Plays an important role in the regulation of polyamine intracellular concentration and has the potential to act as a determinant of cellular sensitivity to the antitumor polyamine analogs. May contribute to beta-alanine production via aldehyde dehydrogenase conversion of 3-amino-propanal. The sequence is that of Spermine oxidase (Smox) from Mus musculus (Mouse).